Here is a 47-residue protein sequence, read N- to C-terminus: Large ribosomal subunit protein bL33A (47 aa).

Belongs to the bacterial ribosomal protein bL33 family.

The protein is Large ribosomal subunit protein bL33A of Staphylococcus aureus (strain JH1).